We begin with the raw amino-acid sequence, 170 residues long: Peptide deformylase 1 (170 aa).

Fe cation contacts are provided by C92 and H135. E136 is an active-site residue. H139 serves as a coordination point for Fe cation.

It belongs to the polypeptide deformylase family. Fe(2+) is required as a cofactor.

The catalysed reaction is N-terminal N-formyl-L-methionyl-[peptide] + H2O = N-terminal L-methionyl-[peptide] + formate. Removes the formyl group from the N-terminal Met of newly synthesized proteins. Requires at least a dipeptide for an efficient rate of reaction. N-terminal L-methionine is a prerequisite for activity but the enzyme has broad specificity at other positions. In Coxiella burnetii (strain RSA 493 / Nine Mile phase I), this protein is Peptide deformylase 1.